The primary structure comprises 321 residues: L-lactate dehydrogenase (321 aa).

Residues valine 19, aspartate 40, lysine 45, tyrosine 71, and 85 to 86 (GA) each bind NAD(+). Residues glutamine 88, arginine 94, and 126–129 (NPVD) each bind substrate. NAD(+) contacts are provided by residues 124 to 126 (ATN) and serine 149. Residue 154–157 (DTAR) participates in substrate binding. Beta-D-fructose 1,6-bisphosphate-binding residues include arginine 159 and histidine 174. Histidine 181 functions as the Proton acceptor in the catalytic mechanism. The residue at position 226 (tyrosine 226) is a Phosphotyrosine. Residue threonine 235 participates in substrate binding.

This sequence belongs to the LDH/MDH superfamily. LDH family. Homotetramer.

It is found in the cytoplasm. The catalysed reaction is (S)-lactate + NAD(+) = pyruvate + NADH + H(+). It functions in the pathway fermentation; pyruvate fermentation to lactate; (S)-lactate from pyruvate: step 1/1. Allosterically activated by fructose 1,6-bisphosphate (FBP). Catalyzes the conversion of lactate to pyruvate. The chain is L-lactate dehydrogenase from Oceanobacillus iheyensis (strain DSM 14371 / CIP 107618 / JCM 11309 / KCTC 3954 / HTE831).